The following is a 1465-amino-acid chain: DNA polymerase III PolC-type (1465 aa).

Residues 427–583 (YVVFDVETTG…YDAEATGRLL (157 aa)) form the Exonuclease domain.

This sequence belongs to the DNA polymerase type-C family. PolC subfamily.

It localises to the cytoplasm. The enzyme catalyses DNA(n) + a 2'-deoxyribonucleoside 5'-triphosphate = DNA(n+1) + diphosphate. In terms of biological role, required for replicative DNA synthesis. This DNA polymerase also exhibits 3' to 5' exonuclease activity. This Streptococcus pyogenes serotype M2 (strain MGAS10270) protein is DNA polymerase III PolC-type.